Here is a 652-residue protein sequence, read N- to C-terminus: Carboxypeptidase S1 homolog A (652 aa).

Residues 1–19 (MRLAASIAVALPVIGAASA) form the signal peptide. A disulfide bridge links C50 with C121. N77, N132, N161, N168, N184, and N202 each carry an N-linked (GlcNAc...) asparagine glycan. The active site involves S238. N-linked (GlcNAc...) asparagine glycosylation is found at N260, N299, N347, and N410. 2 cysteine pairs are disulfide-bonded: C325-C361 and C332-C354. D458 is an active-site residue. C461 serves as a coordination point for substrate. N474, N492, and N505 each carry an N-linked (GlcNAc...) asparagine glycan. The active site involves H516. E517 serves as a coordination point for substrate. An N-linked (GlcNAc...) asparagine glycan is attached at N594. Residues 608 to 628 (AASKGNPPPTTTSSPTASPTA) form a disordered region. The segment covering 618–628 (TTSSPTASPTA) has biased composition (low complexity). G629 carries the GPI-anchor amidated glycine lipid modification. A propeptide spans 630 to 652 (SAMLKAPVAMLAISALTVLAFYL) (removed in mature form).

The protein belongs to the peptidase S10 family.

It localises to the cell membrane. It catalyses the reaction Preferential release of a C-terminal arginine or lysine residue.. Extracellular serine carboxypeptidase that contributes to pathogenicity. The protein is Carboxypeptidase S1 homolog A (SCPA) of Arthroderma benhamiae (strain ATCC MYA-4681 / CBS 112371) (Trichophyton mentagrophytes).